Reading from the N-terminus, the 549-residue chain is Indole-3-acetic acid-amido synthetase GH3.2 (549 aa).

It belongs to the IAA-amido conjugating enzyme family. In terms of tissue distribution, expressed in flowers, pollen, cotyledons, stipules, true leaves, hypocotyls, and all parts of the roots except for the primary root tips.

Catalyzes the synthesis of indole-3-acetic acid (IAA)-amino acid conjugates, providing a mechanism for the plant to cope with the presence of excess auxin. Strongly reactive with Glu, Gln, Trp, Asp, Ala, Leu, Phe, Gly, Tyr, Met, Ile and Val. Little or no product formation with His, Ser, Thr, Arg, Lys, or Cys. Also active on pyruvic and butyric acid analogs of IAA, PAA and the synthetic auxin naphthaleneacetic acid (NAA). The two chlorinated synthetic auxin herbicides 2,4-D and 3,6-dichloro-o-anisic acid (dicamba) cannot be used as substrates. The protein is Indole-3-acetic acid-amido synthetase GH3.2 (GH3.2) of Arabidopsis thaliana (Mouse-ear cress).